Reading from the N-terminus, the 177-residue chain is Nucleoside triphosphate/diphosphate phosphatase (177 aa).

Arginine 23 acts as the Proton donor in catalysis. Mg(2+)-binding residues include asparagine 87, aspartate 103, aspartate 105, aspartate 107, aspartate 120, and glutamate 123.

It belongs to the Ntdp family. The cofactor is Mg(2+).

It catalyses the reaction a ribonucleoside 5'-triphosphate + H2O = a ribonucleoside 5'-diphosphate + phosphate + H(+). The enzyme catalyses a ribonucleoside 5'-diphosphate + H2O = a ribonucleoside 5'-phosphate + phosphate + H(+). Functionally, has nucleoside phosphatase activity towards nucleoside triphosphates and nucleoside diphosphates. This Streptococcus thermophilus (strain CNRZ 1066) protein is Nucleoside triphosphate/diphosphate phosphatase.